The chain runs to 430 residues: Serine--tRNA ligase (430 aa).

An L-serine-binding site is contributed by 237–239 (TAE). 268–270 (RSE) contributes to the ATP binding site. Residue E291 participates in L-serine binding. 355 to 358 (EISS) provides a ligand contact to ATP. S391 serves as a coordination point for L-serine.

The protein belongs to the class-II aminoacyl-tRNA synthetase family. Type-1 seryl-tRNA synthetase subfamily. As to quaternary structure, homodimer. The tRNA molecule binds across the dimer.

It localises to the cytoplasm. It carries out the reaction tRNA(Ser) + L-serine + ATP = L-seryl-tRNA(Ser) + AMP + diphosphate + H(+). The enzyme catalyses tRNA(Sec) + L-serine + ATP = L-seryl-tRNA(Sec) + AMP + diphosphate + H(+). Its pathway is aminoacyl-tRNA biosynthesis; selenocysteinyl-tRNA(Sec) biosynthesis; L-seryl-tRNA(Sec) from L-serine and tRNA(Sec): step 1/1. Its function is as follows. Catalyzes the attachment of serine to tRNA(Ser). Is also able to aminoacylate tRNA(Sec) with serine, to form the misacylated tRNA L-seryl-tRNA(Sec), which will be further converted into selenocysteinyl-tRNA(Sec). The sequence is that of Serine--tRNA ligase from Enterobacter sp. (strain 638).